A 554-amino-acid chain; its full sequence is Potassium/proton antiporter CemA (554 aa).

A helical transmembrane segment spans residues 50 to 70 (SLFVVLFIPFFINIFTKIYVF). The tract at residues 113–410 (KTENFFPEKP…VPYNFNKNTE (298 aa)) is insert. The next 3 helical transmembrane spans lie at 429–449 (ISAITNLLADFMGLFILLFLL), 479–499 (MLLFTDLLVGFHSPRGWEVIF), and 514–534 (IIFLLVGTFPVLLDALFKYWI).

This sequence belongs to the CemA family.

Its subcellular location is the plastid. It localises to the chloroplast inner membrane. The enzyme catalyses K(+)(in) + H(+)(out) = K(+)(out) + H(+)(in). In terms of biological role, contributes to K(+)/H(+) antiport activity by supporting proton efflux to control proton extrusion and homeostasis in chloroplasts in a light-dependent manner to modulate photosynthesis. Prevents excessive induction of non-photochemical quenching (NPQ) under continuous-light conditions. Indirectly promotes efficient inorganic carbon uptake into chloroplasts. In Stigeoclonium helveticum (Green alga), this protein is Potassium/proton antiporter CemA.